The chain runs to 557 residues: Dihydroxy-acid dehydratase (557 aa).

Cys-50 is a binding site for [2Fe-2S] cluster. Asp-82 contacts Mg(2+). Cys-123 serves as a coordination point for [2Fe-2S] cluster. Mg(2+)-binding residues include Asp-124 and Lys-125. Lys-125 is modified (N6-carboxylysine). Residue Cys-195 participates in [2Fe-2S] cluster binding. A Mg(2+)-binding site is contributed by Glu-447. Ser-473 acts as the Proton acceptor in catalysis.

Belongs to the IlvD/Edd family. As to quaternary structure, homodimer. Requires [2Fe-2S] cluster as cofactor. The cofactor is Mg(2+).

The catalysed reaction is (2R)-2,3-dihydroxy-3-methylbutanoate = 3-methyl-2-oxobutanoate + H2O. It carries out the reaction (2R,3R)-2,3-dihydroxy-3-methylpentanoate = (S)-3-methyl-2-oxopentanoate + H2O. It participates in amino-acid biosynthesis; L-isoleucine biosynthesis; L-isoleucine from 2-oxobutanoate: step 3/4. It functions in the pathway amino-acid biosynthesis; L-valine biosynthesis; L-valine from pyruvate: step 3/4. In terms of biological role, functions in the biosynthesis of branched-chain amino acids. Catalyzes the dehydration of (2R,3R)-2,3-dihydroxy-3-methylpentanoate (2,3-dihydroxy-3-methylvalerate) into 2-oxo-3-methylpentanoate (2-oxo-3-methylvalerate) and of (2R)-2,3-dihydroxy-3-methylbutanoate (2,3-dihydroxyisovalerate) into 2-oxo-3-methylbutanoate (2-oxoisovalerate), the penultimate precursor to L-isoleucine and L-valine, respectively. The chain is Dihydroxy-acid dehydratase from Nitrosospira multiformis (strain ATCC 25196 / NCIMB 11849 / C 71).